Consider the following 842-residue polypeptide: Translation initiation factor IF-2 (842 aa).

Disordered stretches follow at residues methionine 1 to aspartate 41 and arginine 112 to glutamine 219. 2 stretches are compositionally biased toward basic and acidic residues: residues proline 32 to aspartate 41 and arginine 153 to serine 165. The 170-residue stretch at alanine 328–arginine 497 folds into the tr-type G domain. The segment at glycine 337–threonine 344 is G1. Glycine 337–threonine 344 serves as a coordination point for GTP. Residues glycine 362–histidine 366 are G2. The tract at residues aspartate 383–glycine 386 is G3. GTP contacts are provided by residues aspartate 383–histidine 387 and asparagine 437–aspartate 440. A G4 region spans residues asparagine 437–aspartate 440. Positions serine 473–leucine 475 are G5.

The protein belongs to the TRAFAC class translation factor GTPase superfamily. Classic translation factor GTPase family. IF-2 subfamily.

It localises to the cytoplasm. In terms of biological role, one of the essential components for the initiation of protein synthesis. Protects formylmethionyl-tRNA from spontaneous hydrolysis and promotes its binding to the 30S ribosomal subunits. Also involved in the hydrolysis of GTP during the formation of the 70S ribosomal complex. The sequence is that of Translation initiation factor IF-2 (infB) from Treponema pallidum (strain Nichols).